The following is a 260-amino-acid chain: Chloride intracellular channel Clic (260 aa).

A helical transmembrane segment spans residues 42 to 66 (FCQEYFMDLYLLAELKTISLKVTTV).

It belongs to the chloride channel CLIC family. Expressed in cardiac tubes.

The protein resides in the mitochondrion. It localises to the membrane. In terms of biological role, might insert into membranes and form chloride ion channels. Channel activity depends on the pH. May play a role in ethanol sensitivity. The protein is Chloride intracellular channel Clic of Drosophila melanogaster (Fruit fly).